We begin with the raw amino-acid sequence, 566 residues long: Bifunctional NADP phosphatase/NAD kinase (566 aa).

An NADP phosphatase region spans residues 1–283 (MDMLEMALNI…KLVGIFGNRW (283 aa)). The Mg(2+) site is built by Glu66, Asp85, Val87, Asp88, and Asp229. Residues 275 to 566 (LVGIFGNRWR…YNKLKKLSLM (292 aa)) are NAD kinase. The active-site Proton acceptor is the Asp355. Residues 355–356 (DG), Arg360, 430–431 (NE), Lys441, Arg458, Asp460, 471–476 (TAYSLS), and Asn528 contribute to the NAD(+) site.

The protein in the N-terminal section; belongs to the inositol monophosphatase superfamily. In the C-terminal section; belongs to the NAD kinase family. In terms of assembly, homotetramer. Mg(2+) serves as cofactor.

The protein resides in the cytoplasm. The catalysed reaction is NAD(+) + ATP = ADP + NADP(+) + H(+). It catalyses the reaction NADP(+) + H2O = phosphate + NAD(+). Involved in the regulation of the intracellular balance between NAD(H) and NADP(H), and is a key enzyme in the biosynthesis of NADP. Catalyzes the phosphorylation and dephosphorylation of NAD and NADP, respectively. Although it shows conflicting dual activities and is able to supply NADP, it seems that its physiological role is to prevent excess accumulation of NADP. The polypeptide is Bifunctional NADP phosphatase/NAD kinase (Methanococcus maripaludis (strain DSM 14266 / JCM 13030 / NBRC 101832 / S2 / LL)).